A 333-amino-acid polypeptide reads, in one-letter code: Abequosyltransferase RfbV (333 aa).

Belongs to the glycosyltransferase 2 family.

It carries out the reaction CDP-alpha-D-abequose + alpha-D-Man-(1-&gt;4)-alpha-L-Rha-(1-&gt;3)-alpha-D-Gal-di-trans,octa-cis-undecaprenyl diphosphate = alpha-D-Abe-(1-&gt;3)-alpha-D-Man-(1-&gt;4)-alpha-L-Rha-(1-&gt;3)-alpha-D-Gal-di-trans,octa-cis-undecaprenyl diphosphate + CDP + H(+). It participates in bacterial outer membrane biogenesis; LPS O-antigen biosynthesis. In terms of biological role, catalyzes the transfer of CDP-abequose on D-mannosyl-L-rhamnosyl-D-galactose-1-diphospholipid to yield D-abequosyl-D-mannosyl-rhamnosyl-D-galactose-1-diphospholipid. The chain is Abequosyltransferase RfbV (rfbV) from Salmonella typhimurium (strain LT2 / SGSC1412 / ATCC 700720).